Consider the following 1213-residue polypeptide: DNA-directed RNA polymerase subunit beta (1213 aa).

A disordered region spans residues 1153–1213 (RDMDEDSSEH…ADESDGKVSK (61 aa)). The span at 1171–1198 (MAEEQEKKKLAEETGKSENKEDSNETAD) shows a compositional bias: basic and acidic residues.

The protein belongs to the RNA polymerase beta chain family. As to quaternary structure, the RNAP catalytic core consists of 2 alpha, 1 beta, 1 beta' and 1 omega subunit. When a sigma factor is associated with the core the holoenzyme is formed, which can initiate transcription.

It catalyses the reaction RNA(n) + a ribonucleoside 5'-triphosphate = RNA(n+1) + diphosphate. Functionally, DNA-dependent RNA polymerase catalyzes the transcription of DNA into RNA using the four ribonucleoside triphosphates as substrates. The polypeptide is DNA-directed RNA polymerase subunit beta (Lactobacillus acidophilus (strain ATCC 700396 / NCK56 / N2 / NCFM)).